The chain runs to 293 residues: Small ribosomal subunit protein uS3 (293 aa).

Residues 39–107 (VREYLKAKLK…PVAVNIEEVR (69 aa)) enclose the KH type-2 domain. Residues 210-293 (RNDLPAVETP…PATAADGKGE (84 aa)) are disordered. Basic and acidic residues predominate over residues 219-238 (PRPEEERRPRGPRRDGRPGG).

This sequence belongs to the universal ribosomal protein uS3 family. In terms of assembly, part of the 30S ribosomal subunit. Forms a tight complex with proteins S10 and S14.

In terms of biological role, binds the lower part of the 30S subunit head. Binds mRNA in the 70S ribosome, positioning it for translation. The protein is Small ribosomal subunit protein uS3 of Paracidovorax citrulli (strain AAC00-1) (Acidovorax citrulli).